A 146-amino-acid chain; its full sequence is Large ribosomal subunit protein mL41 (146 aa).

The N-terminal 16 residues, 1–16 (MKGSPISQFSKTSINA), are a transit peptide targeting the mitochondrion.

Belongs to the mitochondrion-specific ribosomal protein mL41 family. In terms of assembly, component of the mitochondrial large ribosomal subunit (mt-LSU). Mature yeast 74S mitochondrial ribosomes consist of a small (37S) and a large (54S) subunit. The 37S small subunit contains a 15S ribosomal RNA (15S mt-rRNA) and 34 different proteins. The 54S large subunit contains a 21S rRNA (21S mt-rRNA) and 46 different proteins.

The protein localises to the mitochondrion. Functionally, component of the mitochondrial ribosome (mitoribosome), a dedicated translation machinery responsible for the synthesis of mitochondrial genome-encoded proteins, including at least some of the essential transmembrane subunits of the mitochondrial respiratory chain. The mitoribosomes are attached to the mitochondrial inner membrane and translation products are cotranslationally integrated into the membrane. This chain is Large ribosomal subunit protein mL41 (MRPL27), found in Saccharomyces cerevisiae (strain ATCC 204508 / S288c) (Baker's yeast).